The chain runs to 50 residues: MDLGSGSSQGGDLETTFQLWLQLLLWAHLAVRFLGYLHRTFRGPKPQPAP.

A helical membrane pass occupies residues 15–37 (TTFQLWLQLLLWAHLAVRFLGYL).

The protein localises to the membrane. The sequence is that of Small integral membrane protein 46 from Homo sapiens (Human).